Reading from the N-terminus, the 115-residue chain is Parathyroid hormone (115 aa).

Residues 1-25 form the signal peptide; that stretch reads MMSAKNMVKVMIVMFAIFLLAKSDG. A propeptide spanning residues 26–31 is cleaved from the precursor; that stretch reads KPVRKR. An important for receptor binding region spans residues 51–69; it reads RVEWLRKKLQDVHNFIALG. The interval 73–115 is disordered; sequence FHRDGGSQRPRKKEDNVLIESHQKSLGEADKADVDVLSKTKSQ.

This sequence belongs to the parathyroid hormone family. Interacts with PTH1R (via N-terminal extracellular domain).

It is found in the secreted. Functionally, parathyroid hormone elevates calcium level by dissolving the salts in bone and preventing their renal excretion. Acts by binding to its receptor, PTH1R, activating G protein-coupled receptor signaling. Stimulates [1-14C]-2-deoxy-D-glucose (2DG) transport and glycogen synthesis in osteoblastic cells. The chain is Parathyroid hormone (PTH) from Equus caballus (Horse).